Reading from the N-terminus, the 282-residue chain is NADPH-dependent 7-cyano-7-deazaguanine reductase (282 aa).

Residue 88–90 (IES) coordinates substrate. 90–91 (SK) provides a ligand contact to NADPH. Residue Cys-190 is the Thioimide intermediate of the active site. Residue Asp-197 is the Proton donor of the active site. 229-230 (HE) serves as a coordination point for substrate. 258–259 (RG) is an NADPH binding site.

It belongs to the GTP cyclohydrolase I family. QueF type 2 subfamily. As to quaternary structure, homodimer.

The protein resides in the cytoplasm. The catalysed reaction is 7-aminomethyl-7-carbaguanine + 2 NADP(+) = 7-cyano-7-deazaguanine + 2 NADPH + 3 H(+). Its pathway is tRNA modification; tRNA-queuosine biosynthesis. Its function is as follows. Catalyzes the NADPH-dependent reduction of 7-cyano-7-deazaguanine (preQ0) to 7-aminomethyl-7-deazaguanine (preQ1). This Salmonella paratyphi C (strain RKS4594) protein is NADPH-dependent 7-cyano-7-deazaguanine reductase.